The primary structure comprises 354 residues: 4-hydroxy-2-oxovalerate aldolase 6 (354 aa).

Residues 10–262 (VRIVDTTLRD…ATGLDVMATL (253 aa)) enclose the Pyruvate carboxyltransferase domain. 18 to 19 (RD) contacts substrate. Mn(2+) is bound at residue Asp-19. His-22 serves as the catalytic Proton acceptor. 2 residues coordinate substrate: Ser-172 and His-201. The Mn(2+) site is built by His-201 and His-203. Residue Tyr-292 coordinates substrate.

Belongs to the 4-hydroxy-2-oxovalerate aldolase family.

The catalysed reaction is (S)-4-hydroxy-2-oxopentanoate = acetaldehyde + pyruvate. The sequence is that of 4-hydroxy-2-oxovalerate aldolase 6 from Rhodococcus jostii (strain RHA1).